The following is a 31-amino-acid chain: Cyclotide mden-N (31 aa).

The segment at residues glycine 1 to asparagine 31 is a cross-link (cyclopeptide (Gly-Asn)). 3 disulfide bridges follow: cysteine 5-cysteine 21, cysteine 9-cysteine 23, and cysteine 14-cysteine 28.

This sequence belongs to the cyclotide family. Bracelet subfamily. Post-translationally, this is a cyclic peptide.

In terms of biological role, probably participates in a plant defense mechanism. This is Cyclotide mden-N from Melicytus dentatus (Tree violet).